The primary structure comprises 387 residues: Fructose-1,6-bisphosphate aldolase/phosphatase (387 aa).

Aspartate 13 serves as the catalytic Proton acceptor; for FBP phosphatase activity. Aspartate 13, histidine 20, aspartate 54, and aspartate 55 together coordinate Mg(2+). Histidine 20 serves as a coordination point for beta-D-fructose 1,6-bisphosphate. Histidine 20 is a dihydroxyacetone phosphate binding site. Tyrosine 92 contacts beta-D-fructose 1,6-bisphosphate. A Mg(2+)-binding site is contributed by glutamine 96. 105-106 (GN) contributes to the beta-D-fructose 1,6-bisphosphate binding site. Residue aspartate 133 participates in Mg(2+) binding. Lysine 134 contacts beta-D-fructose 1,6-bisphosphate. Residue lysine 134 participates in dihydroxyacetone phosphate binding. The active-site Proton donor/acceptor; for FBP aldolase activity is tyrosine 229. The Mg(2+) site is built by lysine 232, aspartate 233, and aspartate 234. Lysine 232 acts as the Schiff-base intermediate with DHAP; for FBP aldolase activity in catalysis. Beta-D-fructose 1,6-bisphosphate contacts are provided by residues 242–243 (QS), arginine 266, aspartate 287, and tyrosine 348. Dihydroxyacetone phosphate is bound by residues arginine 266 and aspartate 287.

Belongs to the FBP aldolase/phosphatase family. Homooctamer; dimer of tetramers. Mg(2+) serves as cofactor.

It catalyses the reaction beta-D-fructose 1,6-bisphosphate + H2O = beta-D-fructose 6-phosphate + phosphate. It carries out the reaction beta-D-fructose 1,6-bisphosphate = D-glyceraldehyde 3-phosphate + dihydroxyacetone phosphate. It participates in carbohydrate biosynthesis; gluconeogenesis. Functionally, catalyzes two subsequent steps in gluconeogenesis: the aldol condensation of dihydroxyacetone phosphate (DHAP) and glyceraldehyde-3-phosphate (GA3P) to fructose-1,6-bisphosphate (FBP), and the dephosphorylation of FBP to fructose-6-phosphate (F6P). The chain is Fructose-1,6-bisphosphate aldolase/phosphatase from Ignicoccus hospitalis (strain KIN4/I / DSM 18386 / JCM 14125).